The chain runs to 283 residues: Hydroxyacylglutathione hydrolase-like protein (283 aa).

Zn(2+)-binding residues include His-54, His-56, Asp-58, His-59, His-110, Asp-134, and His-173.

Belongs to the metallo-beta-lactamase superfamily. Glyoxalase II family. The cofactor is Zn(2+).

Hydrolase acting on ester bonds. The polypeptide is Hydroxyacylglutathione hydrolase-like protein (Haghl) (Mus musculus (Mouse)).